Consider the following 284-residue polypeptide: Large ribosomal subunit protein uL2 (284 aa).

Residues 232-284 (RGTAMNPVDHPHGGGEGRHNGYIPRTPWGKVTKGLKTRDKRKSNKWIVKDRRK) form a disordered region. The span at 240 to 250 (DHPHGGGEGRH) shows a compositional bias: basic and acidic residues. Residues 264 to 284 (KGLKTRDKRKSNKWIVKDRRK) show a composition bias toward basic residues.

Belongs to the universal ribosomal protein uL2 family. Part of the 50S ribosomal subunit. Forms a bridge to the 30S subunit in the 70S ribosome.

One of the primary rRNA binding proteins. Required for association of the 30S and 50S subunits to form the 70S ribosome, for tRNA binding and peptide bond formation. It has been suggested to have peptidyltransferase activity; this is somewhat controversial. Makes several contacts with the 16S rRNA in the 70S ribosome. This chain is Large ribosomal subunit protein uL2, found in Chlamydia abortus (strain DSM 27085 / S26/3) (Chlamydophila abortus).